Here is a 195-residue protein sequence, read N- to C-terminus: Inner membrane protein YohC (195 aa).

Over 1-32 (MSHVWGLFSHPDREMQVINRENETISHHYTHH) the chain is Cytoplasmic. A helical transmembrane segment spans residues 33-55 (VLLMAAIPVICAFIGTTQIGWNF). The Periplasmic segment spans residues 56–64 (GDGTILKLS). Residues 65 to 87 (WFTGLALAVLFYGVMLAGVAVMG) traverse the membrane as a helical segment. The Cytoplasmic segment spans residues 88-107 (RVIWWMARNYPQRPSLAHCM). A helical transmembrane segment spans residues 108-130 (VFAGYVATPLFLSGLVALYPLVW). Residues 131–134 (LCAL) are Periplasmic-facing. The helical transmembrane segment at 135–157 (VGTVALFYTGYLLYLGIPSFLNI) threads the bilayer. Residues 158–169 (NKEEGLSFSSST) lie on the Cytoplasmic side of the membrane. The chain crosses the membrane as a helical span at residues 170-192 (LAIGVLVLEVLLALTVILWGYGY). Topologically, residues 193–195 (RLF) are periplasmic.

Its subcellular location is the cell inner membrane. The polypeptide is Inner membrane protein YohC (yohC) (Escherichia coli O6:H1 (strain CFT073 / ATCC 700928 / UPEC)).